A 647-amino-acid polypeptide reads, in one-letter code: Serine/threonine-protein kinase PLK3 (647 aa).

Residues 1 to 56 (MEPAAGFLSPRPFPRAAAPSSPPAGPGPPASASPRSEPGVLAGPQTPDASRLITDP) form a disordered region. Residues 20 to 31 (SSPPAGPGPPAS) are compositionally biased toward pro residues. A Protein kinase domain is found at 62 to 314 (YIKGRLLGKG…IEQILRHDFF (253 aa)). ATP contacts are provided by residues 68 to 76 (LGKGGFARC) and Lys-91. The Proton acceptor role is filled by Asp-185. POLO box domains are found at residues 464–542 (WVSK…YMEQ) and 563–646 (LLLQ…DRSP).

This sequence belongs to the protein kinase superfamily. Ser/Thr protein kinase family. CDC5/Polo subfamily. In terms of assembly, interacts with GOLGB1. Interacts (via the POLO-box domain) with CIB1; leading to inhibit PLK3 kinase activity. Post-translationally, phosphorylated in an ATM-dependent manner following DNA damage. Phosphorylated as cells enter mitosis and dephosphorylated as cells exit mitosis. As to expression, constitutively expressed in post-mitotic neurons.

It localises to the cell projection. The protein resides in the dendrite. Its subcellular location is the cytoplasm. The protein localises to the nucleus. It is found in the nucleolus. It localises to the golgi apparatus. The protein resides in the cytoskeleton. Its subcellular location is the microtubule organizing center. The protein localises to the centrosome. The catalysed reaction is L-seryl-[protein] + ATP = O-phospho-L-seryl-[protein] + ADP + H(+). It catalyses the reaction L-threonyl-[protein] + ATP = O-phospho-L-threonyl-[protein] + ADP + H(+). Serine/threonine-protein kinase involved in cell cycle regulation, response to stress and Golgi disassembly. Polo-like kinases act by binding and phosphorylating proteins that are already phosphorylated on a specific motif recognized by the POLO box domains. Phosphorylates ATF2, BCL2L1, CDC25A, CDC25C, CHEK2, HIF1A, JUN, p53/TP53, p73/TP73, PTEN, TOP2A and VRK1. Involved in cell cycle regulation: required for entry into S phase and cytokinesis. Phosphorylates BCL2L1, leading to regulate the G2 checkpoint and progression to cytokinesis during mitosis. Plays a key role in response to stress: rapidly activated upon stress stimulation, such as ionizing radiation, reactive oxygen species (ROS), hyperosmotic stress, UV irradiation and hypoxia. Involved in DNA damage response and G1/S transition checkpoint by phosphorylating CDC25A, p53/TP53 and p73/TP73. Phosphorylates p53/TP53 in response to reactive oxygen species (ROS), thereby promoting p53/TP53-mediated apoptosis. Phosphorylates CHEK2 in response to DNA damage, promoting the G2/M transition checkpoint. Phosphorylates the transcription factor p73/TP73 in response to DNA damage, leading to inhibit p73/TP73-mediated transcriptional activation and pro-apoptotic functions. Phosphorylates HIF1A and JUN is response to hypoxia. Phosphorylates ATF2 following hyperosmotic stress in corneal epithelium. Also involved in Golgi disassembly during the cell cycle: part of a MEK1/MAP2K1-dependent pathway that induces Golgi fragmentation during mitosis by mediating phosphorylation of VRK1. May participate in endomitotic cell cycle, a form of mitosis in which both karyokinesis and cytokinesis are interrupted and is a hallmark of megakaryocyte differentiation, via its interaction with CIB1. The protein is Serine/threonine-protein kinase PLK3 (Plk3) of Rattus norvegicus (Rat).